The sequence spans 488 residues: Beta-1,3-glucan-binding protein (488 aa).

A signal peptide spans 1-17; sequence MFVTFICFLACLTCSYG. A binds to curdlan, laminarihexaose and laminarin. The complex formation with laminarin induces self-association of the complexes into a macro structure, likely containing six protein and three laminarin molecules. The macro structures may form a platform on a microbial surface for recruitment of downstream proteases, as a means of amplification of the initial signal of pathogen recognition for the activation of the phenoloxidase cascade region spans residues 18–135; sequence QPRAQQYVVP…GTPADTSLEP (118 aa). Residues 18-198 are binds to curdlan, lipopolysaccharide and lipoteichoic acid, activates the phenoloxidase cascade and is resistant to proteolytic degradation by trypsin or chymotrypsin, but is not as effective as the full-length protein in aggregation of microorganisms; it reads QPRAQQYVVP…LKDLANWEAE (181 aa). Positions 24 to 123 constitute a CBM39 domain; that stretch reads YVVPSAKLEA…GEWTVTEFVN (100 aa). The binds to laminarihexaose and laminarin stretch occupies residues 24-127; the sequence is YVVPSAKLEA…VTEFVNEDGT (104 aa). Residues Asp-72, 99–101, and Arg-110 each bind substrate; that span reads WTY. A disordered region spans residues 125–158; the sequence is DGTPADTSLEPTTAPTPVRPDQPNQPIPTHRPDP. The segment covering 129–139 has biased composition (polar residues); that stretch reads ADTSLEPTTAP. The span at 141–150 shows a compositional bias: pro residues; the sequence is PVRPDQPNQP. The region spanning 144-488 is the GH16 domain; sequence PDQPNQPIPT…KVDYVRVYAL (345 aa). Positions 199–488 are binds to laminarin, but not to curdlan, does not activate the phenoloxidase cascade, is susceptible to proteinase digestion by trypsin or chymotrypsin and does not cause aggregation of microorganisms; the sequence is VKFPEEPDYP…KVDYVRVYAL (290 aa). Residues Asn-373 and Asn-453 are each glycosylated (N-linked (GlcNAc...) asparagine).

This sequence belongs to the insect beta-1,3-glucan binding protein family. In terms of assembly, monomer. In terms of processing, the N-terminus is blocked. As to expression, fat body and hemolymph.

The protein resides in the secreted. Functionally, involved in the recognition of invading microorganisms causing their aggregation. Activates the phenoloxidase cascade. Binds specifically to beta-1,3-glucan. Binds to curdlan, a linear water-insoluble beta-1,3-glucan polysaccharide, and to laminarin, a water-soluble beta-1,3-glucan polysaccharide containing beta-1,6 branches. Also binds to lipopolysaccharide and lipoteichoic acid. The chain is Beta-1,3-glucan-binding protein from Plodia interpunctella (Indianmeal moth).